The primary structure comprises 235 residues: Thiamine import ATP-binding protein ThiQ (235 aa).

The ABC transporter domain occupies 2–230 (LKLIDITWLY…QASASALLGI (229 aa)). An ATP-binding site is contributed by 32 to 39 (GPSGAGKS).

It belongs to the ABC transporter superfamily. Thiamine importer (TC 3.A.1.19.1) family. In terms of assembly, the complex is composed of two ATP-binding proteins (ThiQ), two transmembrane proteins (ThiP) and a solute-binding protein (ThiB).

The protein resides in the cell inner membrane. It carries out the reaction thiamine(out) + ATP + H2O = thiamine(in) + ADP + phosphate + H(+). Part of the ABC transporter complex ThiBPQ involved in thiamine import. Responsible for energy coupling to the transport system. Is also involved in thiamine pyrophosphate (TPP) transport. The sequence is that of Thiamine import ATP-binding protein ThiQ from Salmonella typhimurium (strain LT2 / SGSC1412 / ATCC 700720).